Consider the following 252-residue polypeptide: Autophagy-related protein 27 (252 aa).

The first 15 residues, 1–15, serve as a signal peptide directing secretion; that stretch reads MILASLLTFATAALA. The 146-residue stretch at 16–161 folds into the MRH domain; the sequence is FDCSDKELER…SMKTKAACIT (146 aa). Residues 16 to 176 lie on the Lumenal side of the membrane; sequence FDCSDKELER…KKEKHDNGES (161 aa). 3 disulfide bridges follow: Cys-18-Cys-57, Cys-66-Cys-73, and Cys-130-Cys-159. N-linked (GlcNAc...) asparagine glycosylation occurs at Asn-49. The chain crosses the membrane as a helical span at residues 177–197; the sequence is WGWFTWIFIFLVLFLSIYIIG. At 198–252 the chain is on the cytoplasmic side; sequence GAWFQYNKGNAIDFQSALKEVVENFIELLKGLPSFGKEIIEKFTGRSNRGEYSAV.

This sequence belongs to the ATG27 family.

It is found in the cytoplasmic vesicle membrane. It localises to the golgi apparatus membrane. Its subcellular location is the mitochondrion membrane. The protein resides in the preautophagosomal structure membrane. Plays a key role in autophagy. Effector of VPS34 phosphatidylinositol 3-phosphate kinase signaling. Regulates the cytoplasm to vacuole transport (Cvt) vesicle formation. Plays a role in ATG protein retrieval from the pre-autophagosomal structure (PAS) and is especially required for autophagy-dependent cycling of ATG9. Finally, plays an important role in biofilm formation and resistance to antifungal compounds such as fluconazole, itraconazole, terbinafine and caspofungin. The sequence is that of Autophagy-related protein 27 from Candida albicans (strain SC5314 / ATCC MYA-2876) (Yeast).